Reading from the N-terminus, the 348-residue chain is Ion-translocating oxidoreductase complex subunit D (348 aa).

Transmembrane regions (helical) follow at residues 25–45, 68–88, and 124–144; these read ILAA…GTFI, PISP…IGVA, and AMAA…TWAA. T182 is modified (FMN phosphoryl threonine). Transmembrane regions (helical) follow at residues 211–231, 237–257, 263–283, 296–316, and 317–337; these read TGEG…FLLA, WHIS…GFGA, ASPL…FIAT, LLFG…GGYP, and DGVA…DYYI.

This sequence belongs to the NqrB/RnfD family. As to quaternary structure, the complex is composed of six subunits: RnfA, RnfB, RnfC, RnfD, RnfE and RnfG. It depends on FMN as a cofactor.

Its subcellular location is the cell inner membrane. Part of a membrane-bound complex that couples electron transfer with translocation of ions across the membrane. The protein is Ion-translocating oxidoreductase complex subunit D of Shewanella amazonensis (strain ATCC BAA-1098 / SB2B).